A 48-amino-acid chain; its full sequence is Delta-actitoxin-Bcg1c (48 aa).

3 disulfide bridges follow: C4-C45, C6-C35, and C28-C46.

Its subcellular location is the secreted. The protein resides in the nematocyst. Functionally, binds specifically to voltage-gated sodium channels SCN1A/Nav1.1, thereby delaying their inactivation during signal transduction. This chain is Delta-actitoxin-Bcg1c, found in Bunodosoma cangicum (Sea anemone).